The primary structure comprises 375 residues: Succinyl-diaminopimelate desuccinylase (375 aa).

Residue histidine 66 coordinates Zn(2+). Aspartate 68 is a catalytic residue. Residue aspartate 99 coordinates Zn(2+). The active-site Proton acceptor is the glutamate 133. Positions 134, 162, and 348 each coordinate Zn(2+).

The protein belongs to the peptidase M20A family. DapE subfamily. Homodimer. Zn(2+) serves as cofactor. Requires Co(2+) as cofactor.

It catalyses the reaction N-succinyl-(2S,6S)-2,6-diaminopimelate + H2O = (2S,6S)-2,6-diaminopimelate + succinate. Its pathway is amino-acid biosynthesis; L-lysine biosynthesis via DAP pathway; LL-2,6-diaminopimelate from (S)-tetrahydrodipicolinate (succinylase route): step 3/3. Functionally, catalyzes the hydrolysis of N-succinyl-L,L-diaminopimelic acid (SDAP), forming succinate and LL-2,6-diaminopimelate (DAP), an intermediate involved in the bacterial biosynthesis of lysine and meso-diaminopimelic acid, an essential component of bacterial cell walls. The sequence is that of Succinyl-diaminopimelate desuccinylase from Shigella boydii serotype 18 (strain CDC 3083-94 / BS512).